A 460-amino-acid chain; its full sequence is Argininosuccinate lyase (460 aa).

The protein belongs to the lyase 1 family. Argininosuccinate lyase subfamily.

Its subcellular location is the cytoplasm. It catalyses the reaction 2-(N(omega)-L-arginino)succinate = fumarate + L-arginine. Its pathway is amino-acid biosynthesis; L-arginine biosynthesis; L-arginine from L-ornithine and carbamoyl phosphate: step 3/3. The polypeptide is Argininosuccinate lyase (Maridesulfovibrio salexigens (strain ATCC 14822 / DSM 2638 / NCIMB 8403 / VKM B-1763) (Desulfovibrio salexigens)).